Consider the following 470-residue polypeptide: UDP-N-acetylmuramoylalanine--D-glutamate ligase (470 aa).

An ATP-binding site is contributed by 121–127 (GTNGKST).

It belongs to the MurCDEF family.

It localises to the cytoplasm. It carries out the reaction UDP-N-acetyl-alpha-D-muramoyl-L-alanine + D-glutamate + ATP = UDP-N-acetyl-alpha-D-muramoyl-L-alanyl-D-glutamate + ADP + phosphate + H(+). It functions in the pathway cell wall biogenesis; peptidoglycan biosynthesis. Cell wall formation. Catalyzes the addition of glutamate to the nucleotide precursor UDP-N-acetylmuramoyl-L-alanine (UMA). In Rhizobium johnstonii (strain DSM 114642 / LMG 32736 / 3841) (Rhizobium leguminosarum bv. viciae), this protein is UDP-N-acetylmuramoylalanine--D-glutamate ligase.